The sequence spans 355 residues: Heme A synthase (355 aa).

The next 8 helical transmembrane spans lie at 21–41, 85–102, 136–156, 173–193, 208–228, 264–284, 299–319, and 322–342; these read LARW…VGGI, INLG…FWEW, LFAL…MVAS, LLTA…LGAL, AIGV…VAGL, FLIH…LLLL, ALVI…VSGV, and WVAV…AAAL. H270 is a binding site for heme. Position 327 (H327) interacts with heme.

Belongs to the COX15/CtaA family. Type 2 subfamily. In terms of assembly, interacts with CtaB. It depends on heme b as a cofactor.

The protein resides in the cell membrane. The catalysed reaction is Fe(II)-heme o + 2 A + H2O = Fe(II)-heme a + 2 AH2. Its pathway is porphyrin-containing compound metabolism; heme A biosynthesis; heme A from heme O: step 1/1. Catalyzes the conversion of heme O to heme A by two successive hydroxylations of the methyl group at C8. The first hydroxylation forms heme I, the second hydroxylation results in an unstable dihydroxymethyl group, which spontaneously dehydrates, resulting in the formyl group of heme A. In Sphingopyxis alaskensis (strain DSM 13593 / LMG 18877 / RB2256) (Sphingomonas alaskensis), this protein is Heme A synthase.